The chain runs to 226 residues: Large ribosomal subunit protein uL1 (226 aa).

The protein belongs to the universal ribosomal protein uL1 family. As to quaternary structure, part of the 50S ribosomal subunit.

In terms of biological role, binds directly to 23S rRNA. The L1 stalk is quite mobile in the ribosome, and is involved in E site tRNA release. Its function is as follows. Protein L1 is also a translational repressor protein, it controls the translation of the L11 operon by binding to its mRNA. This chain is Large ribosomal subunit protein uL1, found in Mycoplasma capricolum subsp. capricolum (strain California kid / ATCC 27343 / NCTC 10154).